Reading from the N-terminus, the 212-residue chain is MRSRLLLSVAHLPTIRETTEEMLLGGPGQEPPPSPSLDDYVRSISRLAQPTSVLDKATAQGQPRPPHRPAQACRKGRPAVSLRDITARFSGQQPTLPMADTVDPLDWLFGESQEKQPSQRDLPRRTGPSAGLWGPHRQMDSSKPMGAPRGRLCEARMPGHSLARPPQDGQQSSDLRSWTFGQSAQAMASRHRPRPSSVLRTLYSHLPVIHEL.

Disordered regions lie at residues 20–39 (EEMLLGGPGQEPPPSPSLDD), 49–79 (QPTSVLDKATAQGQPRPPHRPAQACRKGRPA), and 113–176 (QEKQ…SDLR). Residues 113–124 (QEKQPSQRDLPR) show a composition bias toward basic and acidic residues.

Expressed in various tissues, including pancreas, placenta, ovary, testis and kidney.

It localises to the cytoplasm. The protein localises to the peroxisome. Its subcellular location is the mitochondrion. Its function is as follows. Acts as a critical modulator of FOXO3-induced autophagy via increased cellular ROS. This chain is Protein DEPP1, found in Homo sapiens (Human).